The primary structure comprises 1390 residues: General transcriptional corepressor trfA (1390 aa).

Positions 53 to 143 (QQQQQHQQHQ…QQQQQQQQQQ (91 aa)) are disordered. TPR repeat units follow at residues 171-204 (ESIW…NPFS), 206-238 (KALT…ESKN), 239-272 (GEVW…LPNP), 275-308 (PNLW…DNKF), 312-345 (TEIY…PPLP), 349-382 (SDIW…NATH), 384-419 (KVLQ…DSSD), 420-453 (AQTW…DGRN), 454-487 (PTFW…NPFL), and 489-521 (EVWY…DPHN). Disordered regions lie at residues 539–596 (PIGK…NSFV), 632–938 (ERGR…YNNI), and 958–1390 (LDEE…KLER). Positions 540 to 557 (IGKDGYDLQNGEHGEHGG) are enriched in basic and acidic residues. Low complexity predominate over residues 582-593 (QNNRNGNNNGNN). The span at 632-641 (ERGRGEDMHN) shows a compositional bias: basic and acidic residues. Over residues 644–744 (HSQYSNSMSM…MNDNVNSKNN (101 aa)) the composition is skewed to low complexity. The span at 745 to 803 (DVLDRRYKGILEREKTSPNGDGRDNRDNIRDNRDNRDSRDGRDNRDGRDSRDRIQEYTR) shows a compositional bias: basic and acidic residues. Low complexity predominate over residues 805 to 846 (YNNNNNNNNSISSINNNNNNNNNNYNNNNNNNNNNNNNNNNN). Residues 857–871 (HNDRRSYERDNKERI) show a composition bias toward basic and acidic residues. Low complexity-rich tracts occupy residues 872–898 (NNNN…NNNN) and 917–937 (NNSN…NYNN). Composition is skewed to basic and acidic residues over residues 977–993 (KEAE…KERS), 1000–1029 (EKPD…EKES), 1037–1099 (KEIE…EKES), and 1120–1135 (TKKD…EKKL). Over residues 1136 to 1146 (SSVSPTTTAVE) the composition is skewed to polar residues. The span at 1147–1169 (QSRDETKELEMDTKEDSEKEKKS) shows a compositional bias: basic and acidic residues. Composition is skewed to low complexity over residues 1170–1180 (STTTTAAASES) and 1192–1203 (TTTTTTTTNTTT). Basic and acidic residues predominate over residues 1206 to 1218 (PTHKDKESSKNDD). Positions 1219-1228 (TTTTTTTTTT) are enriched in low complexity. Residues 1229–1239 (KSAKSPNSSPT) show a composition bias toward polar residues. Over residues 1240 to 1263 (RSDEVVEPHQDASQEEINKRKLED) the composition is skewed to basic and acidic residues. 2 stretches are compositionally biased toward low complexity: residues 1277-1289 (STPS…STPS) and 1315-1337 (SSSS…TNSS). A compositionally biased stretch (basic and acidic residues) spans 1339–1374 (KNERDRDRERERERERDREREREREREREREREKNK).

This sequence belongs to the CYC8/SSN6 family. In terms of assembly, associates with tupA to form the trfA-tupA corepressor complex.

The protein resides in the nucleus. In terms of biological role, acts as a component of the trfA-tupA corepressor complex which is involved in the repression of many genes in a wide variety of physiological processes. May also be involved in the derepression of at least some target genes. The complex is recruited to target genes by interaction with DNA-bound transcriptional repressors. The complex recruits histone deacetylases to produce a repressive chromatin structure, interacts with hypoacetylated N-terminal tails of histones H3 and H4 that have been programmed for repression by the action of histone deacetylases and interferes directly with the transcriptional machinery by associating with the RNA polymerase II mediator complex. Required for normal growth and for aggregation in early development. Required for a proper chemotactic response to cAMP. The sequence is that of General transcriptional corepressor trfA (trfA) from Dictyostelium discoideum (Social amoeba).